A 348-amino-acid chain; its full sequence is D-lactate dehydrogenase kk1H (348 aa).

Residues 158–159 (RI), Asp-178, 208–209 (CP), 235–237 (TSR), and Asp-261 contribute to the NAD(+) site. Arg-237 is a catalytic residue. The active site involves Glu-266. Residue His-298 is the Proton donor of the active site.

It belongs to the D-isomer specific 2-hydroxyacid dehydrogenase family.

It participates in secondary metabolite biosynthesis. Its function is as follows. D-lactate dehydrogenase; part of the gene cluster that mediates the biosynthesis of KK-1, a novel cyclic depsipeptide with 10 residues which is a promising active compound with high activity against many plant pathogens, especially Botrytis cinerea. Within the pathway, kk1H catalyzes in the synthesis of D-lactic acid from pyruvic acid, which is recognized by the A domain of the first kk1B module. The nonribosomal peptide synthetase (NRPS) kk1B catalyzes the elongation and cyclization of the decapeptide chain composed of 1 D-lactic acid residue (D-Lac), 1 pipecolic acid residue (Pip), 1 aspartic acid residue (Asp), 1 isoleucine residue (Ile), 1 glycine residue (Gly), 1 tyrosine residue (Tyr) and 4 valine residues (Val). The Asp, Ile and 3 Val residues are N-methylated by the 5 methyltransferase domains from the NRPS (found in modules 3, 5, 6, 7 and 9), whereas the Tyr residue is O-methylated by the cluster encoded O-methyltransferase kk1A. The thioesterase kk1J is likely to be involved in the corrective mechanism of peptide chain synthesis. The D-lactate dehydrogenase kk1H is involved in the synthesis of D-lactic acid from pyruvic acid, which is recognized by the A domain of the first kk1B module. The pyrroline-5-carboxylate reductase kk1I is involved in the synthesis of the L-pipecolic acid residue of KK-1 from delta-1-pyrroline-5-carboxylate (P5C), a metabolic intermediate of lysine. It still is unclear how kk1C and kk1D are involved in the production of KK-1. The protein is D-lactate dehydrogenase kk1H of Curvularia clavata.